A 518-amino-acid chain; its full sequence is Calcium/calmodulin-dependent protein kinase kinase cmkC (518 aa).

Residues 1–72 (MANEGAGSLQ…SEYTLSQDDG (72 aa)) are disordered. 2 stretches are compositionally biased toward polar residues: residues 8 to 17 (SLQQDASPGS) and 60 to 71 (NARSEYTLSQDD). The Protein kinase domain occupies 81 to 376 (YVIKQEIGRG…MDELREHPWV (296 aa)). Residues 87-95 (IGRGSFGAV) and Lys-109 contribute to the ATP site. Positions 119-149 (RAKSQLLRQSRGPKRSSRWPKLPFSSPGTGT) are disordered. Asp-243 (proton acceptor) is an active-site residue. Positions 404–409 (FSAITK) are autoinhibitory domain. A calmodulin-binding region spans residues 407–431 (ITKNFGHVLAVMKAAKKFKSLQGPT). The segment at 453–472 (PTQMDPEESVSLPSPLPYKK) is disordered.

Belongs to the protein kinase superfamily. Ser/Thr protein kinase family.

It catalyses the reaction L-seryl-[protein] + ATP = O-phospho-L-seryl-[protein] + ADP + H(+). The catalysed reaction is L-threonyl-[protein] + ATP = O-phospho-L-threonyl-[protein] + ADP + H(+). Activated by Ca(2+)/calmodulin. Binding of calmodulin may relieve intrasteric autoinhibition. In terms of biological role, calcium/calmodulin-dependent protein kinase that operates in the calcium-triggered CaMKK-CaMK1 signaling cascade. Phosphorylates and activates cmkB in vitro. Required in G1-phase of the cell cycle for proper timing of the initial nuclear division after germination as well as for subsequent nuclear division cycles. Required for the normal temporal regulation of nimX activity. The sequence is that of Calcium/calmodulin-dependent protein kinase kinase cmkC from Emericella nidulans (Aspergillus nidulans).